Reading from the N-terminus, the 127-residue chain is Holo-[acyl-carrier-protein] synthase (127 aa).

Residues Asp-8 and Glu-57 each coordinate Mg(2+).

This sequence belongs to the P-Pant transferase superfamily. AcpS family. Requires Mg(2+) as cofactor.

It localises to the cytoplasm. It carries out the reaction apo-[ACP] + CoA = holo-[ACP] + adenosine 3',5'-bisphosphate + H(+). Functionally, transfers the 4'-phosphopantetheine moiety from coenzyme A to a Ser of acyl-carrier-protein. The chain is Holo-[acyl-carrier-protein] synthase from Vesicomyosocius okutanii subsp. Calyptogena okutanii (strain HA).